The chain runs to 667 residues: Ribosomal oxygenase 1 (667 aa).

Met1 is subject to N-acetylmethionine. Residues 1-11 are compositionally biased toward low complexity; sequence MDGLRASAGLL. Positions 1 to 99 are disordered; sequence MDGLRASAGL…ATGREPHGQL (99 aa). Basic residues-rich tracts occupy residues 12 to 22 and 35 to 44; these read RRGRLRRRRQQ and RPRKIRRQLR. 3 positions are modified to phosphoserine: Ser61, Ser64, and Ser108. Positions 322 to 467 constitute a JmjC domain; the sequence is CSLRLLCPQA…DFLEAVLPLA (146 aa). Positions 368, 370, and 433 each coordinate Fe cation.

The protein belongs to the ROX family. NO66 subfamily. In terms of assembly, interacts with SP7/OSX; the interaction is direct. Interacts with MYC. Interacts with PHF19; leading to its recruitment to H3K36me3 sites. Fe(2+) is required as a cofactor.

It is found in the nucleus. Its subcellular location is the nucleolus. It localises to the nucleoplasm. The catalysed reaction is N(6),N(6)-dimethyl-L-lysyl(36)-[histone H3] + 2 2-oxoglutarate + 2 O2 = L-lysyl(36)-[histone H3] + 2 formaldehyde + 2 succinate + 2 CO2. It catalyses the reaction N(6)-methyl-L-lysyl-[protein] + 2-oxoglutarate + O2 = L-lysyl-[protein] + formaldehyde + succinate + CO2. It carries out the reaction L-histidyl-[protein] + 2-oxoglutarate + O2 = (3S)-3-hydroxy-L-histidyl-[protein] + succinate + CO2. Functionally, oxygenase that can act as both a histone lysine demethylase and a ribosomal histidine hydroxylase. Specifically demethylates 'Lys-4' (H3K4me) and 'Lys-36' (H3K36me) of histone H3, thereby playing a central role in histone code. Preferentially demethylates trimethylated H3 'Lys-4' (H3K4me3) and monomethylated H3 'Lys-4' (H3K4me1) residues, while it has weaker activity for dimethylated H3 'Lys-36' (H3K36me2). Acts as a regulator of osteoblast differentiation via its interaction with SP7/OSX by demethylating H3K4me and H3K36me, thereby inhibiting SP7/OSX-mediated promoter activation. Also catalyzes demethylation of non-histone proteins, such as CGAS: demethylation of monomethylated CGAS promotes interaction between CGAS and PARP1, followed by PARP1 inactivation. Also catalyzes the hydroxylation of 60S ribosomal protein L8 on 'His-216', thereby playing a role in ribosome biogenesis. Participates in MYC-induced transcriptional activation. The protein is Ribosomal oxygenase 1 (RIOX1) of Bos taurus (Bovine).